The sequence spans 506 residues: Histidine ammonia-lyase (506 aa).

The segment at residues 143-145 is a cross-link (5-imidazolinone (Ala-Gly)); it reads ASG. Ser144 is modified (2,3-didehydroalanine (Ser)).

It belongs to the PAL/histidase family. Contains an active site 4-methylidene-imidazol-5-one (MIO), which is formed autocatalytically by cyclization and dehydration of residues Ala-Ser-Gly.

It localises to the cytoplasm. The enzyme catalyses L-histidine = trans-urocanate + NH4(+). It functions in the pathway amino-acid degradation; L-histidine degradation into L-glutamate; N-formimidoyl-L-glutamate from L-histidine: step 1/3. This chain is Histidine ammonia-lyase, found in Enterobacter sp. (strain 638).